The primary structure comprises 471 residues: Steroid C26-monooxygenase (471 aa).

Glycine 238 serves as a coordination point for substrate. Cysteine 412 lines the heme pocket.

Belongs to the cytochrome P450 family. Heme serves as cofactor.

It carries out the reaction cholest-4-en-3-one + 6 reduced [2Fe-2S]-[ferredoxin] + 3 O2 + 5 H(+) = (25S)-3-oxocholest-4-en-26-oate + 6 oxidized [2Fe-2S]-[ferredoxin] + 4 H2O. Involved in the utilization of cholesterol as the sole carbon and energy source by degrading the side chain. Primarily catalyzes the sequential oxidation of the terminal methyl of cholest-4-en-3-one into (25S)-26-hydroxycholest-4-en-3-one (alcohol), (25S)-26-oxocholest-4-en-3-one (aldehyde), to finally yield the carboxylic acid (25S)-3-oxocholest-4-en-26-oate. Also able to sequentially oxidize cholesterol itself, not only cholest-4-en-3-one. This Rhodococcus jostii (strain RHA1) protein is Steroid C26-monooxygenase (cyp125).